The primary structure comprises 137 residues: Large ribosomal subunit protein uL16 (137 aa).

Belongs to the universal ribosomal protein uL16 family. Part of the 50S ribosomal subunit.

Its function is as follows. Binds 23S rRNA and is also seen to make contacts with the A and possibly P site tRNAs. The chain is Large ribosomal subunit protein uL16 from Streptococcus pneumoniae serotype 2 (strain D39 / NCTC 7466).